Consider the following 587-residue polypeptide: Nucleoporin ndc-1 (587 aa).

Residues 1-79 (MMGENSSAYT…FHSEIDVRKK (79 aa)) lie on the Cytoplasmic side of the membrane. The disordered stretch occupies residues 32-55 (ASTSATSSPNLRKSPNRGFSSPRA). Residues 80 to 100 (LASFVCGAAVALSFIVTVSIL) form a helical membrane-spanning segment. The Perinuclear space portion of the chain corresponds to 101-121 (KLSIWAPFSSVQDSLTWWLYP). A helical membrane pass occupies residues 122–142 (TSWPVTLFIWLSSVAWTFLII). Residues 143-161 (HQFCTVTQVPRIPITDTYA) lie on the Cytoplasmic side of the membrane. Residues 162-182 (WAGAALEFVHRLIFVYTAFTV) traverse the membrane as a helical segment. Residues 183-187 (SESSF) lie on the Perinuclear space side of the membrane. The helical transmembrane segment at 188–208 (FEDFAWIAIAFSVAISSALVI) threads the bilayer. The Cytoplasmic segment spans residues 209-255 (FRSDFHLNFSNVQVNSFKTLIDFAKSLPYGSLAETSGVDAAIAYTAA). Residues 256–276 (MALTVFGSPLLWGFSAWWLLI) form a helical membrane-spanning segment. The Perinuclear space segment spans residues 277-281 (NIQFH). A helical membrane pass occupies residues 282 to 302 (LVLFGVCFAQQFFAKIFMKIV). At 303 to 587 (NQIVMKPMKF…TIKLVCAEEI (285 aa)) the chain is on the cytoplasmic side.

This sequence belongs to the NDC1 family.

It is found in the nucleus. The protein resides in the nuclear pore complex. The protein localises to the nucleus membrane. In terms of biological role, component of the nuclear pore complex (NPC), which plays a key role in de novo assembly and insertion of NPC in the nuclear envelope. In Caenorhabditis briggsae, this protein is Nucleoporin ndc-1 (npp-22).